A 567-amino-acid chain; its full sequence is Zinc finger protein 512 (567 aa).

Residues Met-1–Arg-32 form a disordered region. The span at Ser-12–Thr-23 shows a compositional bias: polar residues. Residues Lys-18 and Lys-84 each participate in a glycyl lysine isopeptide (Lys-Gly) (interchain with G-Cter in SUMO2) cross-link. Residues Ala-86 to Pro-148 form a disordered region. Residues Lys-119 to Pro-130 show a composition bias toward basic residues. A C2H2-type 1 zinc finger spans residues Phe-197–His-220. Lys-227 is covalently cross-linked (Glycyl lysine isopeptide (Lys-Gly) (interchain with G-Cter in SUMO2)). Residues Leu-287–His-310 form a C2H2-type 2 zinc finger. A Glycyl lysine isopeptide (Lys-Gly) (interchain with G-Cter in SUMO2) cross-link involves residue Lys-333. The C2H2-type 3; atypical zinc-finger motif lies at Ile-406–Cys-430. A C2H2-type 4 zinc finger spans residues Tyr-440–His-463. The interval Gln-486 to Lys-567 is disordered. Residues Arg-495–Gln-508 are compositionally biased toward basic residues. Residues Val-523–Glu-532 show a composition bias toward basic and acidic residues. A compositionally biased stretch (basic residues) spans Lys-556–Lys-567.

Belongs to the krueppel C2H2-type zinc-finger protein family.

Its subcellular location is the nucleus. In terms of biological role, may be involved in transcriptional regulation. The chain is Zinc finger protein 512 (ZNF512) from Homo sapiens (Human).